The primary structure comprises 260 residues: Ribosomal RNA small subunit methyltransferase J (260 aa).

Residues 125-126 and D179 contribute to the S-adenosyl-L-methionine site; that span reads ER. The segment at 234 to 260 is disordered; that stretch reads IDGPKPSHALDGKSSRYDIYPKKALKP. Residues 241-254 show a composition bias toward basic and acidic residues; that stretch reads HALDGKSSRYDIYP.

This sequence belongs to the methyltransferase superfamily. RsmJ family.

The protein localises to the cytoplasm. The catalysed reaction is guanosine(1516) in 16S rRNA + S-adenosyl-L-methionine = N(2)-methylguanosine(1516) in 16S rRNA + S-adenosyl-L-homocysteine + H(+). Functionally, specifically methylates the guanosine in position 1516 of 16S rRNA. The polypeptide is Ribosomal RNA small subunit methyltransferase J (Pseudomonas fluorescens (strain SBW25)).